Reading from the N-terminus, the 239-residue chain is Yolk ferritin (239 aa).

Residues 1 to 18 (MNSVLFLTLAVCSSLAYG) form the signal peptide. Residues 27–217 (QNYKENINQL…HAITRLRSFE (191 aa)) form the Ferritin-like diiron domain. Fe cation is bound by residues Glu-44 and Glu-79. Residues 105 to 146 (KDACETVMKFVTSDTSGLEEFRDRRMCICGFVATKTINDNCG) are insertion; not present in other ferritins. Glu-165 and Gln-199 together coordinate Fe cation.

Belongs to the ferritin family. In terms of assembly, oligomer of 12 or 24 subunits. The functional molecule is roughly spherical and contains a central cavity into which the polymeric ferric iron core is deposited. In terms of tissue distribution, midgut gland and bloodstream.

It localises to the secreted. It carries out the reaction 4 Fe(2+) + O2 + 4 H(+) = 4 Fe(3+) + 2 H2O. Stores iron in a soluble, non-toxic, readily available form. Important for iron homeostasis. Has ferroxidase activity. Iron is taken up in the ferrous form and deposited as ferric hydroxides after oxidation. The sequence is that of Yolk ferritin from Lymnaea stagnalis (Great pond snail).